The chain runs to 177 residues: Putative adenylate kinase (177 aa).

Residues G10, G12, K13, T14, and T15 each coordinate ATP. Residues N30 to I50 form an NMP region. The LID stretch occupies residues E99 to E109. ATP-binding residues include R100 and K138.

The protein belongs to the adenylate kinase family. AK6 subfamily. Interacts with uS11. Not a structural component of 40S pre-ribosomes, but transiently interacts with them by binding to uS11.

It catalyses the reaction AMP + ATP = 2 ADP. It carries out the reaction ATP + H2O = ADP + phosphate + H(+). Functionally, broad-specificity nucleoside monophosphate (NMP) kinase that catalyzes the reversible transfer of the terminal phosphate group between nucleoside triphosphates and monophosphates. Also has ATPase activity. Involved in the late maturation steps of the 30S ribosomal particles, specifically 16S rRNA maturation. While NMP activity is not required for ribosome maturation, ATPase activity is. Associates transiently with small ribosomal subunit protein uS11. ATP hydrolysis breaks the interaction with uS11. May temporarily remove uS11 from the ribosome to enable a conformational change of the ribosomal RNA that is needed for the final maturation step of the small ribosomal subunit. This Thermococcus kodakarensis (strain ATCC BAA-918 / JCM 12380 / KOD1) (Pyrococcus kodakaraensis (strain KOD1)) protein is Putative adenylate kinase.